Reading from the N-terminus, the 208-residue chain is Effector protein MavE (208 aa).

Positions 77–80 match the NPxY eukaryotic motif motif; the sequence is NPRY. A helical membrane pass occupies residues 184–204; that stretch reads VLFPFVAATVAVAATAASVLF.

In terms of assembly, homotrimer.

Its subcellular location is the secreted. It is found in the host vacuole. The protein resides in the host pathogen-containing vacuole. It localises to the host pathogen-containing vacuole membrane. In terms of biological role, virulence effector that is indispensable for endoplasmic reticulum (ER)-mediated remodeling of the Legionella pneumophila-containing vacuole (LCV) and lysosomal evasion. Essential for intracellular replication in human monocyte-derived macrophages (hMDMs) and amoebae, as well as for intrapulmonary proliferation in mice. The polypeptide is Effector protein MavE (Legionella pneumophila subsp. pneumophila (strain Philadelphia 1 / ATCC 33152 / DSM 7513)).